The primary structure comprises 477 residues: Ribulose bisphosphate carboxylase large chain (477 aa).

Residues 1–2 constitute a propeptide that is removed on maturation; it reads MS. Pro3 carries the post-translational modification N-acetylproline. Lys14 carries the N6,N6,N6-trimethyllysine modification. Substrate contacts are provided by Asn123 and Thr173. Residue Lys175 is the Proton acceptor of the active site. Substrate is bound at residue Lys177. Residues Lys201, Asp203, and Glu204 each coordinate Mg(2+). Lys201 is subject to N6-carboxylysine. His294 (proton acceptor) is an active-site residue. Substrate contacts are provided by Arg295, His327, and Ser379.

This sequence belongs to the RuBisCO large chain family. Type I subfamily. Heterohexadecamer of 8 large chains and 8 small chains; disulfide-linked. The disulfide link is formed within the large subunit homodimers. Mg(2+) serves as cofactor. Post-translationally, the disulfide bond which can form in the large chain dimeric partners within the hexadecamer appears to be associated with oxidative stress and protein turnover.

It is found in the plastid. The protein resides in the chloroplast. It carries out the reaction 2 (2R)-3-phosphoglycerate + 2 H(+) = D-ribulose 1,5-bisphosphate + CO2 + H2O. It catalyses the reaction D-ribulose 1,5-bisphosphate + O2 = 2-phosphoglycolate + (2R)-3-phosphoglycerate + 2 H(+). RuBisCO catalyzes two reactions: the carboxylation of D-ribulose 1,5-bisphosphate, the primary event in carbon dioxide fixation, as well as the oxidative fragmentation of the pentose substrate in the photorespiration process. Both reactions occur simultaneously and in competition at the same active site. This Solanum lycopersicum (Tomato) protein is Ribulose bisphosphate carboxylase large chain (rbcL).